The sequence spans 405 residues: 26S proteasome regulatory subunit 8 homolog (405 aa).

Position 2 is an N-acetylthreonine (Thr-2). 189-196 is an ATP binding site; sequence GPPGTGKT.

The protein belongs to the AAA ATPase family. May form a homodimer or a heterodimer with a related family member. Interacts with OLA1, TMA17, and UBR1. Post-translationally, N-acetylated by NAT1.

It localises to the cytoplasm. Its subcellular location is the nucleus. Its function is as follows. The 26S proteasome is involved in the ATP-dependent degradation of ubiquitinated proteins. The regulatory (or ATPase) complex confers ATP dependency and substrate specificity to the 26S complex. The chain is 26S proteasome regulatory subunit 8 homolog (RPT6) from Saccharomyces cerevisiae (strain ATCC 204508 / S288c) (Baker's yeast).